A 296-amino-acid polypeptide reads, in one-letter code: Sulfotransferase 1B1 (296 aa).

48–53 (KSGTTW) contributes to the 3'-phosphoadenylyl sulfate binding site. 107 to 109 (KTH) is a substrate binding site. H109 functions as the Proton acceptor in the catalytic mechanism. 3'-phosphoadenylyl sulfate-binding positions include R131, S139, Y194, 228 to 233 (TSFEMM), and 258 to 260 (RKG).

The protein belongs to the sulfotransferase 1 family. In terms of tissue distribution, expressed highly in the colon, kidney and small intestine of male and female dogs. Highly expressed in the jejunum and ileum of the male dog than the female dog, which displayed more expression in duodenum (at protein level).

It localises to the cytoplasm. The catalysed reaction is a phenol + 3'-phosphoadenylyl sulfate = an aryl sulfate + adenosine 3',5'-bisphosphate + H(+). The enzyme catalyses 3,3',5-triiodo-L-thyronine + 3'-phosphoadenylyl sulfate = 3,3',5-triiodo-L-thyronine sulfate + adenosine 3',5'-bisphosphate + H(+). It carries out the reaction 3,3',5'-triiodo-L-thyronine + 3'-phosphoadenylyl sulfate = 3,3',5'-triiodo-L-thyronine sulfate + adenosine 3',5'-bisphosphate + H(+). It catalyses the reaction 3,3'-diiodo-L-thyronine + 3'-phosphoadenylyl sulfate = 3,3'-diiodo-L-thyronine sulfate + adenosine 3',5'-bisphosphate + H(+). The catalysed reaction is 4-ethylphenol + 3'-phosphoadenylyl sulfate = 4-ethylphenyl sulfate + adenosine 3',5'-bisphosphate + H(+). Functionally, sulfotransferase that utilizes 3'-phospho-5'-adenylyl sulfate (PAPS) as sulfonate donor to catalyze the sulfate conjugation of dopamine, small phenols such as 1-naphthol and p-nitrophenol and thyroid hormones, including 3,3'-diiodothyronine, triidothyronine (T3) and reverse triiodothyronine (rT3). May play a role in gut microbiota-host metabolic interaction. O-sulfonates 4-ethylphenol (4-EP), a dietary tyrosine-derived metabolite produced by gut bacteria. The product 4-EPS crosses the blood-brain barrier and may negatively regulate oligodendrocyte maturation and myelination, affecting the functional connectivity of different brain regions associated with the limbic system. This chain is Sulfotransferase 1B1 (SULT1B1), found in Canis lupus familiaris (Dog).